A 355-amino-acid chain; its full sequence is S-adenosylmethionine:tRNA ribosyltransferase-isomerase (355 aa).

This sequence belongs to the QueA family. As to quaternary structure, monomer.

It localises to the cytoplasm. It catalyses the reaction 7-aminomethyl-7-carbaguanosine(34) in tRNA + S-adenosyl-L-methionine = epoxyqueuosine(34) in tRNA + adenine + L-methionine + 2 H(+). Its pathway is tRNA modification; tRNA-queuosine biosynthesis. Functionally, transfers and isomerizes the ribose moiety from AdoMet to the 7-aminomethyl group of 7-deazaguanine (preQ1-tRNA) to give epoxyqueuosine (oQ-tRNA). In Burkholderia orbicola (strain MC0-3), this protein is S-adenosylmethionine:tRNA ribosyltransferase-isomerase.